We begin with the raw amino-acid sequence, 383 residues long: Anhydro-N-acetylmuramic acid kinase (383 aa).

9-16 (GTSLDGID) is a binding site for ATP.

It belongs to the anhydro-N-acetylmuramic acid kinase family.

It carries out the reaction 1,6-anhydro-N-acetyl-beta-muramate + ATP + H2O = N-acetyl-D-muramate 6-phosphate + ADP + H(+). It participates in amino-sugar metabolism; 1,6-anhydro-N-acetylmuramate degradation. Its pathway is cell wall biogenesis; peptidoglycan recycling. Functionally, catalyzes the specific phosphorylation of 1,6-anhydro-N-acetylmuramic acid (anhMurNAc) with the simultaneous cleavage of the 1,6-anhydro ring, generating MurNAc-6-P. Is required for the utilization of anhMurNAc either imported from the medium or derived from its own cell wall murein, and thus plays a role in cell wall recycling. The polypeptide is Anhydro-N-acetylmuramic acid kinase (Clostridioides difficile (strain 630) (Peptoclostridium difficile)).